We begin with the raw amino-acid sequence, 94 residues long: Large ribosomal subunit protein bL27 (94 aa).

Residues 1 to 9 (MLKLNLQFF) constitute a propeptide that is removed on maturation.

This sequence belongs to the bacterial ribosomal protein bL27 family. Post-translationally, the N-terminus is cleaved by ribosomal processing cysteine protease Prp.

The protein is Large ribosomal subunit protein bL27 of Staphylococcus epidermidis (strain ATCC 35984 / DSM 28319 / BCRC 17069 / CCUG 31568 / BM 3577 / RP62A).